The primary structure comprises 273 residues: 4-hydroxybenzoate octaprenyltransferase (273 aa).

A run of 8 helical transmembrane segments spans residues 7–27, 30–50, 83–103, 122–142, 146–166, 197–217, 221–241, and 253–273; these read IGIYLLLWPTLWALFLASEGF, LKLLLIFVLGVVLMRSAGCVI, FFVLLIMLAFLLVLLTNWLTI, WTYFPQFVLGLAFAMSVLMAF, LNEIPITAWYVFAATVIWTVI, LIIGILQIIFLLILIKISNVF, ISYHITLLLVTLLMIYHQYLI, and FLHNNYIGMVIFIGIVLSVGL.

It belongs to the UbiA prenyltransferase family. It depends on Mg(2+) as a cofactor.

The protein localises to the cell inner membrane. The enzyme catalyses all-trans-octaprenyl diphosphate + 4-hydroxybenzoate = 4-hydroxy-3-(all-trans-octaprenyl)benzoate + diphosphate. The protein operates within cofactor biosynthesis; ubiquinone biosynthesis. Its function is as follows. Catalyzes the prenylation of para-hydroxybenzoate (PHB) with an all-trans polyprenyl group. Mediates the second step in the final reaction sequence of ubiquinone-8 (UQ-8) biosynthesis, which is the condensation of the polyisoprenoid side chain with PHB, generating the first membrane-bound Q intermediate 3-octaprenyl-4-hydroxybenzoate. The chain is 4-hydroxybenzoate octaprenyltransferase from Vesicomyosocius okutanii subsp. Calyptogena okutanii (strain HA).